The following is a 256-amino-acid chain: MIIGIDIGNTHIVTGIYDNNGELISTFRIATNDKMTEDEYFSYFNNITKYNEISIKKVDAILISSVVPNIIITFQFFARKYFKVEATIVDLEKKLPFTFAKGINYTGFGADRIIDITEAMQKYPDKNLVIFDFGTATTYDVLKKGVYIGGGILPGIDMSINALYGNTAKLPRVKFTTPSSVLGTDTMKQIQAAIFFGYAGQIKHIIKKINEELNEEIFVLATGGLGKILSAEIDEIDEYDANLSLKGLYTLYKLNK.

6-13 (DIGNTHIV) is an ATP binding site. Residue 109–112 (GADR) participates in substrate binding. Catalysis depends on D111, which acts as the Proton acceptor. D132 contacts K(+). Position 135 (T135) interacts with ATP. A substrate-binding site is contributed by T186.

The protein belongs to the type III pantothenate kinase family. As to quaternary structure, homodimer. It depends on NH4(+) as a cofactor. K(+) is required as a cofactor.

The protein localises to the cytoplasm. It catalyses the reaction (R)-pantothenate + ATP = (R)-4'-phosphopantothenate + ADP + H(+). It participates in cofactor biosynthesis; coenzyme A biosynthesis; CoA from (R)-pantothenate: step 1/5. Catalyzes the phosphorylation of pantothenate (Pan), the first step in CoA biosynthesis. This is Type III pantothenate kinase from Fusobacterium nucleatum subsp. nucleatum (strain ATCC 25586 / DSM 15643 / BCRC 10681 / CIP 101130 / JCM 8532 / KCTC 2640 / LMG 13131 / VPI 4355).